The sequence spans 182 residues: Adenine phosphoribosyltransferase (182 aa).

Belongs to the purine/pyrimidine phosphoribosyltransferase family. In terms of assembly, homodimer.

It localises to the cytoplasm. The catalysed reaction is AMP + diphosphate = 5-phospho-alpha-D-ribose 1-diphosphate + adenine. The protein operates within purine metabolism; AMP biosynthesis via salvage pathway; AMP from adenine: step 1/1. Functionally, catalyzes a salvage reaction resulting in the formation of AMP, that is energically less costly than de novo synthesis. The protein is Adenine phosphoribosyltransferase of Campylobacter concisus (strain 13826).